We begin with the raw amino-acid sequence, 945 residues long: Splicing factor, suppressor of white-apricot homolog (945 aa).

Disordered regions lie at residues 1 to 28 and 157 to 190; these read MYGA…GTGT and YYDP…PFIA. Basic and acidic residues-rich tracts occupy residues 9-21 and 169-178; these read AKAE…KEEA and PSKQREKSEA. The stretch at 211-253 is one SURP motif 1 repeat; it reads IIERTANFVCKQGAQFEIMLKAKQARNSQFDFLRFDHYLNPYY. A disordered region spans residues 269–298; the sequence is AESKSEEKKKSGPTSDNEEEDDEEDGSYLH. Residue S283 is modified to Phosphoserine. Residues 284-294 are compositionally biased toward acidic residues; the sequence is DNEEEDDEEDG. K315 carries the post-translational modification N6-acetyllysine. Disordered stretches follow at residues 332–355 and 403–438; these read KAQA…PSQV and SSSP…STTT. The span at 335–352 shows a compositional bias: low complexity; that stretch reads ADSSAPAPPTADGTPAQP. The span at 412 to 425 shows a compositional bias: pro residues; the sequence is VPPPPGTTPPPPPT. Residues 426–438 show a composition bias toward low complexity; the sequence is TAESSSGVTSTTT. The stretch at 458 to 498 is one SURP motif 2 repeat; that stretch reads VIDKLAEYVARNGLKFETSVRAKNDQRFEFLQPWHQYNAYY. Disordered stretches follow at residues 512–566, 589–680, and 714–921; these read GSTQ…TVDG, PLEK…QAER, and GVMP…VQSK. Residues 514–527 are compositionally biased toward low complexity; sequence TQAASTAEEAPTET. Residues 528–540 show a composition bias toward acidic residues; sequence AVEESSEAGEDGA. The span at 589–598 shows a compositional bias: basic and acidic residues; it reads PLEKNRVKLD. A phosphoserine mark is found at S601 and S621. Positions 615–630 are enriched in low complexity; the sequence is SSVANPSPAAAPPSAV. Residues 632–686 adopt a coiled-coil conformation; the sequence is EEKKPQLTQEELEAKQAKQKLEDRLAAAAREKLAQASKESKEKQLQAERKRKAAL. T639 bears the Phosphothreonine mark. Basic and acidic residues-rich tracts occupy residues 643–679 and 733–752; these read LEAK…LQAE and KPPE…EERE. 2 stretches are compositionally biased toward basic residues: residues 753–787 and 795–810; these read KKKK…KAKH and TVRR…RRRA. Residues 811–821 show a composition bias toward basic and acidic residues; that stretch reads HSPERRREDRS. 2 positions are modified to phosphoserine: S829 and S831. A compositionally biased stretch (basic residues) spans 835–861; sequence SRKRTRSRSPHEKKKKRRSRSRTKAKA. The span at 871–894 shows a compositional bias: low complexity; it reads QAAQRPSAHSAHSASISPVESRGS. A compositionally biased stretch (basic and acidic residues) spans 895 to 908; that stretch reads SQERSRGVSQEKDG. Phosphoserine is present on residues S899 and S903. The span at 909-920 shows a compositional bias: low complexity; it reads QISSAIVSSVQS.

The protein resides in the nucleus. Plays a role as an alternative splicing regulator. Regulate its own expression at the level of RNA processing. Also regulates the splicing of fibronectin and CD45 genes. May act, at least in part, by interaction with other R/S-containing splicing factors. Represses the splicing of MAPT/Tau exon 10. The sequence is that of Splicing factor, suppressor of white-apricot homolog (Sfswap) from Rattus norvegicus (Rat).